A 357-amino-acid polypeptide reads, in one-letter code: Crh-like protein 1 (357 aa).

An N-terminal signal peptide occupies residues 1–17 (MMLPLLAVSAFASLGAA). The 201-residue stretch at 20 to 220 (YTSCNPTNSL…WAGGETDYDE (201 aa)) folds into the GH16 domain. N-linked (GlcNAc...) asparagine glycosylation is found at N52 and N92. E109 serves as the catalytic Nucleophile. E113 serves as the catalytic Proton donor. E113 serves as a coordination point for chitin. N-linked (GlcNAc...) asparagine glycosylation is present at N131. The chitin site is built by K193, W197, and T208. 2 N-linked (GlcNAc...) asparagine glycosylation sites follow: N242 and N257. The GPI-anchor amidated glycine moiety is linked to residue G326. The propeptide at 327-357 (SASAVFTGAAVTNLPSFFFTVFFALAIALAF) is removed in mature form. A helical transmembrane segment spans residues 337-357 (VTNLPSFFFTVFFALAIALAF).

The protein belongs to the glycosyl hydrolase 16 family. CRH1 subfamily. In terms of processing, the GPI-like anchor contains a phosphoceramide lipid group. The anchor position has not been determined.

It localises to the cell membrane. Its subcellular location is the secreted. It is found in the cell wall. It catalyses the reaction Random endo-hydrolysis of N-acetyl-beta-D-glucosaminide (1-&gt;4)-beta-linkages in chitin and chitodextrins.. Functionally, dual chitinase/transglycosylase that plays a role in cell wall architecture. Chitinase and transglycosylase activities are coupled. Required for the polysaccharide cross-linking at the septa and the cell wall. More specifically, transfers chitin to 1,6-beta-glucan in the cell wall. In Aspergillus fumigatus (strain ATCC MYA-4609 / CBS 101355 / FGSC A1100 / Af293) (Neosartorya fumigata), this protein is Crh-like protein 1.